The following is an 853-amino-acid chain: Trimethylguanosine synthase (853 aa).

Positions 54–84 (NNAGDQGTEEEEDGHSNGTAESHSPNESDLD) are disordered. Phosphothreonine is present on T61. Residues 69–80 (SNGTAESHSPNE) are compositionally biased toward polar residues. Residues S81, S85, S92, and S139 each carry the phosphoserine modification. Y144 is subject to Phosphotyrosine. Residue S152 is modified to Phosphoserine. Disordered regions lie at residues 328–437 (VEQS…DDNG) and 523–549 (ETSQDSLSQNKMQDTCTSSDSEEQDMS). Residues 365 to 383 (KENDISENRSSDQPAKELQ) show a composition bias toward basic and acidic residues. A phosphoserine mark is found at S405 and S431. Over residues 424–435 (DVDENPDSEVDD) the composition is skewed to acidic residues. Over residues 526-541 (QDSLSQNKMQDTCTSS) the composition is skewed to polar residues. S572 carries the phosphoserine modification. Residues 594-623 (CSTEEIPNSPHAETEVEIKKKKKKNKNKKI) are disordered. Residues 612 to 621 (KKKKKKNKNK) are compositionally biased toward basic residues. D711 is a binding site for S-adenosyl-L-methionine.

Belongs to the methyltransferase superfamily. Trimethylguanosine synthase family. May form homooligomers. Interacts with CREBBP/CBP, EED/WAIT1, EP300/P300, NCOA6/PRIP, PPARBP/PBP and SMN. In terms of tissue distribution, ubiquitously expressed.

The protein resides in the cytoplasm. It localises to the nucleus. The protein localises to the cajal body. It is found in the nucleolus. It catalyses the reaction a 5'-end (N(7)-methyl 5'-triphosphoguanosine)-ribonucleoside in snRNA + S-adenosyl-L-methionine = a 5'-end (N(2),N(7)-dimethyl 5'-triphosphoguanosine)-ribonucleoside in snRNA + S-adenosyl-L-homocysteine + H(+). The catalysed reaction is a 5'-end (N(7)-methyl 5'-triphosphoguanosine)-ribonucleoside in snoRNA + S-adenosyl-L-methionine = a 5'-end (N(2),N(7)-dimethyl 5'-triphosphoguanosine)-ribonucleoside in snoRNA + S-adenosyl-L-homocysteine + H(+). The enzyme catalyses a 5'-end (N(2),N(7)-dimethyl 5'-triphosphoguanosine)-ribonucleoside in snRNA + S-adenosyl-L-methionine = a 5'-end (N(2),N(2),N(7)-trimethyl 5'-triphosphoguanosine)-ribonucleoside in snRNA + S-adenosyl-L-homocysteine + H(+). It carries out the reaction a 5'-end (N(2),N(7)-dimethyl 5'-triphosphoguanosine)-ribonucleoside in snoRNA + S-adenosyl-L-methionine = a 5'-end (N(2),N(2),N(7)-trimethyl 5'-triphosphoguanosine)-ribonucleoside in snoRNA + S-adenosyl-L-homocysteine + H(+). Catalyzes the 2 serial methylation steps for the conversion of the 7-monomethylguanosine (m(7)G) caps of snRNAs and snoRNAs to a 2,2,7-trimethylguanosine (m(2,2,7)G) cap structure. The enzyme is specific for guanine, and N7 methylation must precede N2 methylation. Hypermethylation of the m7G cap of U snRNAs leads to their concentration in nuclear foci, their colocalization with coilin and the formation of canonical Cajal bodies (CBs). Plays a role in transcriptional regulation. The protein is Trimethylguanosine synthase (Tgs1) of Mus musculus (Mouse).